The primary structure comprises 160 residues: MASSSVEFRCFVGGLAWATDSNSLEKAFSVYGEIVEAKIVSDRETGRSRGFGFVTFLEEEAMRSAIEAMNGHILDGRNITVNEAQQRGGGGGGGYNRGGGYGGRRDGGGFSRGGGGGYGGGGGGGYGGGRDRGYGGGGGYGGGRDSRGSGGGGSEGGWRN.

The RRM domain occupies 8 to 86; sequence FRCFVGGLAW…RNITVNEAQQ (79 aa). A disordered region spans residues 82-160; sequence NEAQQRGGGG…GGGSEGGWRN (79 aa). The span at 87–160 shows a compositional bias: gly residues; the sequence is RGGGGGGGYN…GGGSEGGWRN (74 aa). The segment at 88–157 is glycine-rich (GR) required for cell-to-cell movement; sequence GGGGGGGYNR…GSGGGGSEGG (70 aa).

Belongs to the GR-RBP family. As to quaternary structure, binds to small phloem-mobile single-stranded RNAs (ss-sRNA, e.g. small interfering RNA (siRNA) and microRNA (miRNA)) in the phloeme exudate, including viral-derived sRNA (vsiRNA). Accumulates in phloem exudates.

The protein localises to the secreted. In terms of biological role, possibly has a role in RNA transcription or processing during stress. Binds sequence non-specifically to RNAs and DNAs. Mediates cell-to-cell trafficking of RNA interference (RNAi) signals (small RNAs (sRNA), e.g. small interfering RNA (siRNA) and microRNA (miRNA)) which regulate growth and development, as well as responses to environmental inputs, including pathogen attack; can compromise zucchini yellow mosaic virus (ZYMV) and tobacco rattle virus (TRV) infections at the early stage. The sequence is that of Small RNA binding protein 1 from Cucumis sativus (Cucumber).